A 65-amino-acid polypeptide reads, in one-letter code: Conotoxin Bu19 (65 aa).

The first 21 residues, 1–21, serve as a signal peptide directing secretion; sequence MGMRMVFTVFLLVVLATTVVS. A propeptide spanning residues 22–48 is cleaved from the precursor; it reads FTSDRASDGRNAAANDKASDLAALAVR. Cystine bridges form between cysteine 50–cysteine 56 and cysteine 51–cysteine 64. Position 64 is a cysteine amide (cysteine 64).

Belongs to the conotoxin A superfamily. As to expression, expressed by the venom duct.

The protein localises to the secreted. The chain is Conotoxin Bu19 from Conus bullatus (Bubble cone).